The chain runs to 318 residues: Protein IMPACT-A (318 aa).

Residues 14–116 form the RWD domain; it reads DEVEALTSIY…EKIREFLLGK (103 aa). Residues 296-318 form a disordered region; the sequence is EESSKQTAKSKKVGKECKKKADH. Basic and acidic residues predominate over residues 308 to 318; the sequence is VGKECKKKADH.

It belongs to the IMPACT family. Interacts with GCN1; prevents the interaction of GCN1 with EIF2AK4/GCN2 and inhibits EIF2AK4/GCN2 kinase activity. Interaction with RPL39; this interaction occurs in a GCN1-independent manner. Associates with ribosomes; this interaction occurs in a GCN1-independent manner. Associates with actin; this interaction occurs in a GCN1-independent manner.

The protein localises to the cytoplasm. Translational regulator that ensures constant high levels of translation upon a variety of stress conditions, such as amino acid starvation, UV-C irradiation, proteasome inhibitor treatment and glucose deprivation. Plays a role as a negative regulator of the EIF2AK4/GCN2 kinase activity; impairs GCN1-mediated EIF2AK4/GCN2 activation, and hence EIF2AK4/GCN2-mediated eIF-2-alpha phosphorylation and subsequent down-regulation of protein synthesis. Plays a role in differentiation of neuronal cells by stimulating neurite outgrowth. This is Protein IMPACT-A (impact-A) from Xenopus tropicalis (Western clawed frog).